Consider the following 273-residue polypeptide: uncharacterized protein (273 aa).

A signal peptide spans 1-21 (MKILRWLFALVMLIATTEAMA).

This sequence to S.typhimurium YadU.

Functionally, part of the yfcOPQRSUV fimbrial operon. Could contribute to adhesion to various surfaces in specific environmental niches. Increases adhesion to eukaryotic T24 bladder epithelial cells in the absence of fim genes. This is an uncharacterized protein from Escherichia coli (strain K12).